Here is a 626-residue protein sequence, read N- to C-terminus: Serine/threonine-protein kinase ATG1a (626 aa).

Residues 10 to 268 enclose the Protein kinase domain; the sequence is YALGPRIGSG…FREFFNHMFL (259 aa). Residues 16–24 and Lys-39 contribute to the ATP site; that span reads IGSGSFAVV. Asp-132 acts as the Proton acceptor in catalysis. The segment covering 288-308 has biased composition (polar residues); it reads KSLLPSAQPSTSTNRFKSSAE. The tract at residues 288 to 347 is disordered; sequence KSLLPSAQPSTSTNRFKSSAENVHKHGSSSSASNSQISMPHTSFEKTRKDTEGQCSSNQS. Residues 315–325 show a composition bias toward low complexity; the sequence is SSSSASNSQIS. A compositionally biased stretch (basic and acidic residues) spans 330–339; that stretch reads SFEKTRKDTE. An AIM (Atg8-family-interacting motif) motif is present at residues 360-363; that stretch reads YVLV.

This sequence belongs to the protein kinase superfamily. Ser/Thr protein kinase family. Interacts with ATG13A. Interacts with ATG8E. Binds to ATG8E on autophagic vesicles. In terms of processing, phosphorylated during nutrient starvation. Dephosphorylated in nutrient-rich conditions.

It is found in the cytoplasmic vesicle. The protein resides in the autophagosome. Serine/threonine protein kinase involved in autophagy in a nutritional condition-dependent manner. The ATG1-ATG13 protein kinase complex regulates downstream events required for autophagosome enclosure and/or vacuolar delivery. Becomes a target of autophagy under nutrient starvation. Connects autophagy to plant nutritional status. This is Serine/threonine-protein kinase ATG1a from Arabidopsis thaliana (Mouse-ear cress).